Here is a 694-residue protein sequence, read N- to C-terminus: MLFARLVLLLVYLAPGSLAKPASTKKRTQWDQIAIDACAKELESHKFDTDVKGRHATLCTYEPALGSWLHCAKDVLDSRKKSKKIFEKTFSKINQYCHDYHKDEVVSNEEYYRIFANASLFIRPLDEVKENIRYPVTPNKASLDRWVWAYFGPLDNIDKGNVYGVTICLYWIGVLFIAAVYHFLNFSRLKQTVFKNKVSAFLRGHYVLPALVHNHAMSVGRWFFIGLVPTRLETLVLFGYVLLHGFLLSSYNFDHNELLSDRRSQVLIFLSDRAGILAFAHFPLIVLFGGKNSTMTWLTGIRYTAFITYHKWLGRFMLVDCTIHAIGYTYHAYIENYWKYVKYSDLWTSGRHAMIIVGILVFFSFFFFRRHYYELFVITHIILAIGFFHACWKHCYKLGWGEWIMACALFWIADRILRLIKIAIFGMPWAKLKLCGESMIEVRISKSSKWWKAEPGQYIYLYFLRPKIFWQSHPFTVMDSLVEDGELVVVITVKNGLTKKLQEYLLESEGYTEMRVLAEGPYGQSTRTHLFESLLFIAGGAGVPGPLSMAIKAGRQVKSNDSHQMIKFVWSVRNLDLLEVYRKEIMVLKELNIDTKIYFTGERKDESNTEEGAIANMSTEGRLLTTSKSAEMITDFGRPNIDEIIEEAVSGAKSLLVTCCGSEGFVDKTRELTAKRVLEHGDKWIEYVEEFQNW.

The N-terminal stretch at 1-19 (MLFARLVLLLVYLAPGSLA) is a signal peptide. Residues 20–163 (KPASTKKRTQ…LDNIDKGNVY (144 aa)) are Extracellular-facing. N-linked (GlcNAc...) asparagine glycosylation is present at Asn117. Residues 164-184 (GVTICLYWIGVLFIAAVYHFL) traverse the membrane as a helical segment. The Cytoplasmic segment spans residues 185–222 (NFSRLKQTVFKNKVSAFLRGHYVLPALVHNHAMSVGRW). The helical transmembrane segment at 223–243 (FFIGLVPTRLETLVLFGYVLL) threads the bilayer. Over 244 to 267 (HGFLLSSYNFDHNELLSDRRSQVL) the chain is Extracellular. A helical transmembrane segment spans residues 268–288 (IFLSDRAGILAFAHFPLIVLF). Residues 274–408 (AGILAFAHFP…GWGEWIMACA (135 aa)) form the Ferric oxidoreductase domain. At 289–311 (GGKNSTMTWLTGIRYTAFITYHK) the chain is on the cytoplasmic side. Residues His310 and His324 each coordinate heme. A helical membrane pass occupies residues 312-334 (WLGRFMLVDCTIHAIGYTYHAYI). Residues 335–347 (ENYWKYVKYSDLW) lie on the Extracellular side of the membrane. A helical membrane pass occupies residues 348–368 (TSGRHAMIIVGILVFFSFFFF). At 369–371 (RRH) the chain is on the cytoplasmic side. Residues 372 to 392 (YYELFVITHIILAIGFFHACW) form a helical membrane-spanning segment. Residues His380 and His394 each coordinate heme. At 393-403 (KHCYKLGWGEW) the chain is on the extracellular side. Residues 404–424 (IMACALFWIADRILRLIKIAI) form a helical membrane-spanning segment. Residues 409 to 528 (LFWIADRILR…EGPYGQSTRT (120 aa)) form the FAD-binding FR-type domain. Over 425-694 (FGMPWAKLKL…IEYVEEFQNW (270 aa)) the chain is Cytoplasmic. 473–479 (HPFTVMD) is a binding site for FAD. Residues 520 to 523 (GPYG) and 660 to 661 (CG) contribute to the NADP(+) site.

The protein belongs to the ferric reductase (FRE) family. FAD serves as cofactor.

It is found in the cell membrane. The catalysed reaction is 2 a Fe(II)-siderophore + NADP(+) + H(+) = 2 a Fe(III)-siderophore + NADPH. Metalloreductase responsible for reducing extracellular iron and copper prior to import. Catalyzes the reductive uptake of Fe(3+)-salts and Fe(3+) bound to catecholate or hydroxamate siderophores. Fe(3+) is reduced to Fe(2+), which then dissociates from the siderophore and can be imported by the high-affinity Fe(2+) transport complex in the plasma membrane. The chain is Ferric reductase transmembrane component 5 (FRE5) from Saccharomyces cerevisiae (strain ATCC 204508 / S288c) (Baker's yeast).